A 153-amino-acid polypeptide reads, in one-letter code: Endoribonuclease YbeY (153 aa).

Zn(2+) is bound by residues histidine 116, histidine 120, and histidine 126.

The protein belongs to the endoribonuclease YbeY family. Zn(2+) serves as cofactor.

The protein localises to the cytoplasm. Functionally, single strand-specific metallo-endoribonuclease involved in late-stage 70S ribosome quality control and in maturation of the 3' terminus of the 16S rRNA. The protein is Endoribonuclease YbeY of Paraburkholderia phymatum (strain DSM 17167 / CIP 108236 / LMG 21445 / STM815) (Burkholderia phymatum).